The sequence spans 225 residues: UPF0758 protein BCQ_4241 (225 aa).

An MPN domain is found at 103 to 225 (SIRSPEDCAR…FVSLKEKGHI (123 aa)). 3 residues coordinate Zn(2+): His174, His176, and Asp187. The short motif at 174–187 (HNHPSGDPAPSRED) is the JAMM motif element.

The protein belongs to the UPF0758 family.

The chain is UPF0758 protein BCQ_4241 from Bacillus cereus (strain Q1).